We begin with the raw amino-acid sequence, 222 residues long: GTP cyclohydrolase 1 (222 aa).

Zn(2+) is bound by residues Cys-111, His-114, and Cys-182.

Belongs to the GTP cyclohydrolase I family. Toroid-shaped homodecamer, composed of two pentamers of five dimers.

It carries out the reaction GTP + H2O = 7,8-dihydroneopterin 3'-triphosphate + formate + H(+). The protein operates within cofactor biosynthesis; 7,8-dihydroneopterin triphosphate biosynthesis; 7,8-dihydroneopterin triphosphate from GTP: step 1/1. The sequence is that of GTP cyclohydrolase 1 from Citrobacter koseri (strain ATCC BAA-895 / CDC 4225-83 / SGSC4696).